The primary structure comprises 366 residues: tRNA/tmRNA (uracil-C(5))-methyltransferase (366 aa).

The S-adenosyl-L-methionine site is built by glutamine 190, tyrosine 218, asparagine 223, glutamate 239, and aspartate 299. The active-site Nucleophile is cysteine 324. Glutamate 358 acts as the Proton acceptor in catalysis.

The protein belongs to the class I-like SAM-binding methyltransferase superfamily. RNA M5U methyltransferase family. TrmA subfamily.

The enzyme catalyses uridine(54) in tRNA + S-adenosyl-L-methionine = 5-methyluridine(54) in tRNA + S-adenosyl-L-homocysteine + H(+). It carries out the reaction uridine(341) in tmRNA + S-adenosyl-L-methionine = 5-methyluridine(341) in tmRNA + S-adenosyl-L-homocysteine + H(+). Its function is as follows. Dual-specificity methyltransferase that catalyzes the formation of 5-methyluridine at position 54 (m5U54) in all tRNAs, and that of position 341 (m5U341) in tmRNA (transfer-mRNA). This Salmonella paratyphi B (strain ATCC BAA-1250 / SPB7) protein is tRNA/tmRNA (uracil-C(5))-methyltransferase.